Here is a 130-residue protein sequence, read N- to C-terminus: Small ribosomal subunit protein uS11 (130 aa).

Belongs to the universal ribosomal protein uS11 family. Part of the 30S ribosomal subunit. Interacts with proteins S7 and S18. Binds to IF-3.

Its function is as follows. Located on the platform of the 30S subunit, it bridges several disparate RNA helices of the 16S rRNA. Forms part of the Shine-Dalgarno cleft in the 70S ribosome. The chain is Small ribosomal subunit protein uS11 from Shewanella amazonensis (strain ATCC BAA-1098 / SB2B).